Consider the following 130-residue polypeptide: DNA-directed RNA polymerase subunit omega (130 aa).

Disordered stretches follow at residues Glu79–Asp98 and Glu109–Glu130.

It belongs to the RNA polymerase subunit omega family. The RNAP catalytic core consists of 2 alpha, 1 beta, 1 beta' and 1 omega subunit. When a sigma factor is associated with the core the holoenzyme is formed, which can initiate transcription.

It catalyses the reaction RNA(n) + a ribonucleoside 5'-triphosphate = RNA(n+1) + diphosphate. In terms of biological role, promotes RNA polymerase assembly. Latches the N- and C-terminal regions of the beta' subunit thereby facilitating its interaction with the beta and alpha subunits. In Bradyrhizobium diazoefficiens (strain JCM 10833 / BCRC 13528 / IAM 13628 / NBRC 14792 / USDA 110), this protein is DNA-directed RNA polymerase subunit omega (rpoZ).